Consider the following 718-residue polypeptide: MQYSIEINKNTEIFDIDKVAKQATGVLMRQGKSVVLATVAREEKQVEEDFLPLTVQYIEKAYAAGKIPGGYVKRETKPSDAETLTARIIDRSLRPLFPKGYAYPTQIVVMVLSADPKVDLQVMSLNAASVALYLSDIPMKAPVCGVRIGKIDGNFILNPNNEELQNSTLDLYVAGVKDELLMIEMRALPDQKENEIFIEAPYADVLTQTTSQNMNELSEDEILEALNLAQKAILNGSNAYEEAFSKHKKNSQIELKNEIEHPEILAFIENNFQKQIKKAINQMAKSERASELNKIAKEILNLEIAKDWSEESILNTLAKVKRKLIREQILNEGKRADGRSLNEVRPISIETNILPNAHGSCLFTRGQTQALVVATLGGENDAQMIDLLTEKNPISERFMVNYNFPGFSVGEASPIKAPGRRELGHGNLAKRALYPSVDENYPYVIRLVSEILESNGSSSMATVCGGSLALKAAGVPSLKLVAGVAMGLIFEDNKYAVLTDIMGLEDHDGDMDFKVAGSKDGITALQMDIKLGGIDQETLKQALYQAKEGRIHILNIMEEATKEIIVNEEVLPKLELFSVDPSKIVDIIGQAGKTIKEIIEKFGVSIDLDREKGEVKIAGSQNEQIKAAKDYIINITSSQKGTKKGSKDKDISDFELGQEFQGIVKKIAPFGAFVELKNGVDGLLHSSKIKHLDLSENQSLKVKISEIKNGKISVDLCE.

Residues Asp506 and Asp512 each coordinate Mg(2+). Positions 572 to 632 constitute a KH domain; sequence PKLELFSVDP…EQIKAAKDYI (61 aa). The S1 motif domain maps to 657-718; sequence GQEFQGIVKK…NGKISVDLCE (62 aa).

This sequence belongs to the polyribonucleotide nucleotidyltransferase family. Mg(2+) is required as a cofactor.

Its subcellular location is the cytoplasm. It catalyses the reaction RNA(n+1) + phosphate = RNA(n) + a ribonucleoside 5'-diphosphate. Involved in mRNA degradation. Catalyzes the phosphorolysis of single-stranded polyribonucleotides processively in the 3'- to 5'-direction. The chain is Polyribonucleotide nucleotidyltransferase from Campylobacter jejuni subsp. doylei (strain ATCC BAA-1458 / RM4099 / 269.97).